A 3241-amino-acid polypeptide reads, in one-letter code: PHD finger protein rhinoceros (3241 aa).

Over residues 1-16 (MSQRGKRGNQQHHQSH) the composition is skewed to basic residues. The disordered stretch occupies residues 1–126 (MSQRGKRGNQ…GASSSSSWQA (126 aa)). Low complexity-rich tracts occupy residues 42–55 (PPNG…AEVT) and 90–126 (RAAA…SWQA). The PHD-type 1 zinc finger occupies 312–362 (NVICDVCRSPDSEEANEMVFCDNCNICVHQACYGITAIPSGQWLCRTCSMG). The C2HC pre-PHD-type zinc finger occupies 364–398 (KPDCVLCPNKGGAMKSNKSGKHWAHVSCALWIPEV). The PHD-type 2 zinc-finger motif lies at 422 to 481 (LICVLCRKRVGSCIQCSVKPCKTAYHVTCAFQHGLEMRAIIEEGNAEDGVKLRSYCQKHS). Disordered stretches follow at residues 482–501 (MSKG…ASVA), 508–554 (NRYG…ARAQ), 737–1266 (SGKQ…VATP), 1279–1483 (PQRQ…STKV), 1500–1613 (PKTN…SETR), and 1632–1746 (NLGA…QHLL). Over residues 540–554 (KTELTSEERNQARAQ) the composition is skewed to basic and acidic residues. Over residues 762–777 (KKLNNGILSSRTSSPE) the composition is skewed to polar residues. The span at 807-874 (KSSAAAATST…SGSSSAGSGV (68 aa)) shows a compositional bias: low complexity. Over residues 931–943 (ERCRNRQEPERGA) the composition is skewed to basic and acidic residues. The span at 949-965 (QSKSVPNRSQASRSKPT) shows a compositional bias: polar residues. Acidic residues predominate over residues 995-1007 (DADESVSSDESEE). The span at 1019–1031 (STTTSGLATTGSA) shows a compositional bias: low complexity. Positions 1060–1075 (TVESNVSDSQNQQTIR) are enriched in polar residues. Over residues 1087-1104 (TAATTSSTSQAASSTSKA) the composition is skewed to low complexity. Composition is skewed to polar residues over residues 1117–1126 (IGNSTKTKPN) and 1151–1163 (NMRS…TLQP). Residues 1184 to 1211 (KVKDSSSRVSNEADKSSLEKVRPKEHLQ) are compositionally biased toward basic and acidic residues. Positions 1313 to 1327 (VTSATISGSGSSVPA) are enriched in polar residues. Threonine 1346 carries the post-translational modification Phosphothreonine. The residue at position 1352 (serine 1352) is a Phosphoserine. The residue at position 1364 (threonine 1364) is a Phosphothreonine. Positions 1382-1426 (SSSSSGDSESSSSSSSSGSSSSSGGSDSDSESQASNSENPSSREP) are enriched in low complexity. A Phosphothreonine modification is found at threonine 1456. The span at 1463 to 1483 (NVLNIPSTRSRQNSTTKSTKV) shows a compositional bias: polar residues. Over residues 1541–1558 (SPEKTVSRCKSRAEESPK) the composition is skewed to basic and acidic residues. Residues 1576–1594 (KGTSSLDKLLNKKQQQMNH) show a composition bias toward polar residues. Residues 1599-1608 (TPPPISPTPP) show a composition bias toward pro residues. Positions 1664 to 1675 (TAPTRTQLSASA) are enriched in polar residues. Residues 1688–1699 (PAAPLPASPTPT) are compositionally biased toward pro residues. The segment covering 1717-1731 (RRMRWRSRRRRRRRS) has biased composition (basic residues). Coiled coils occupy residues 1741–1770 (HTQH…ASKY) and 1893–1925 (SEED…KEAV). 11 disordered regions span residues 2037–2061 (LEKS…GQPA), 2124–2148 (AERR…PVVT), 2203–2227 (NNTN…TPNN), 2346–2454 (TPPV…GGVT), 2598–2629 (ATGT…PAPN), 2667–2691 (SEEV…ARSQ), 2768–2811 (NDDS…NSSS), 2832–2911 (GAGA…SVDE), 2964–3015 (NKRG…TTTM), 3042–3169 (KAET…EAAM), and 3184–3241 (VNVG…CEVR). Polar residues predominate over residues 2359-2381 (KRTSVSGSNLSKKQTHKSPQLPQ). Over residues 2392-2402 (PLQPPTPPAPV) the composition is skewed to pro residues. Positions 2430-2439 (GSGGSGAPGR) are enriched in gly residues. Composition is skewed to polar residues over residues 2598-2611 (ATGT…QHSG) and 2673-2689 (DSDS…SDAR). Residues 2855 to 2865 (NNDNNGKTGAA) are compositionally biased toward polar residues. Positions 2876-2887 (KTLESSEDDHQA) are enriched in basic and acidic residues. Phosphoserine is present on residues serine 2880 and serine 2881. The segment covering 2899 to 2911 (ANETPSGVSSVDE) has biased composition (polar residues). Over residues 2964-2974 (NKRGVVVKDGE) the composition is skewed to basic and acidic residues. A compositionally biased stretch (basic residues) spans 2984-3002 (KRPKSSKPKKEKKEKKRQK). The segment covering 3003–3015 (QQQLILSSSTTTM) has biased composition (low complexity). Phosphoserine is present on residues serine 3104 and serine 3110. 2 stretches are compositionally biased toward polar residues: residues 3115 to 3130 (LLNS…NTSP) and 3184 to 3197 (VNVG…NSLP). The segment covering 3198–3218 (SASGTGSASSNSCNSNSINNN) has biased composition (low complexity). The span at 3219-3230 (GSGGGRASGEGG) shows a compositional bias: gly residues.

Belongs to the JADE family.

It localises to the nucleus. In terms of biological role, may function as a negative regulator of the EGFR/Ras/MAPK signaling pathway during eye development. In Drosophila melanogaster (Fruit fly), this protein is PHD finger protein rhinoceros (rno).